We begin with the raw amino-acid sequence, 262 residues long: Endoplasmic reticulum chaperone BiP (262 aa).

ATP is bound at residue 8–11; that stretch reads GSTR. The interval 53 to 63 is interdomain linker; the sequence is QDTGDLVLLDV. Positions 64–144 are substrate-binding (SBD); it reads CPLTLGIETV…PRGVPQIEVT (81 aa). Lys-91 bears the N6-succinyllysine mark. Arg-136 carries the omega-N-methylarginine modification. O-AMP-threonine; alternate is present on Thr-162. Thr-162 is modified (phosphothreonine; alternate). Lys-229 bears the N6,N6,N6-trimethyllysine; by METTL21A; in vitro mark. N6,N6-dimethyllysine; alternate is present on Lys-229. Residue Lys-229 is modified to N6-methyllysine; alternate. Position 235 is an N6-methyllysine (Lys-235).

It belongs to the heat shock protein 70 family. In terms of assembly, monomer and homooligomer; homooligomerization via the interdomain linker inactivates the chaperone activity and acts as a storage of HSPA5/BiP molecules. Interacts with DNAJC1 (via J domain). Component of an EIF2 complex at least composed of CELF1/CUGBP1, CALR, CALR3, EIF2S1, EIF2S2, HSP90B1 and HSPA5. Part of a large chaperone multiprotein complex comprising DNAJB11, HSP90B1, HSPA5, HYOU, PDIA2, PDIA4, PDIA6, PPIB, SDF2L1, UGGT1 and very small amounts of ERP29, but not, or at very low levels, CALR nor CANX. Interacts with TMEM132A and TRIM21. May form a complex with ERLEC1, OS9, SEL1L and SYVN1. Interacts with DNAJC10. Interacts with DNAJB9/ERdj4; leading to recruit HSPA5/BiP to ERN1/IRE1. Interacts with ERN1/IRE1 (via luminal domain); the interaction takes place following interaction with DNAJB9/ERdj4 and leads to inactivate ERN1/IRE1, the interaction also competitively inhibits ERN1 interaction with MANF. Interacts directly with MANF (via SAP domain); the interaction inhibits ATP binding to HSPA5/BiP and subsequent nucleotide exchange. Interacts with EIF2AK3/PERK (via luminal domain); interaction leads to inactivate EIF2AK3/PERK. Interacts with MX1. Interacts with METTL23. Interacts with CEMIP; the interaction induces calcium leakage from the endoplasmic reticulum and cell migration. Interacts with PCSK4 form; the interaction takes place in the endoplasmic reticulum. Interacts with CIPC. Interacts with CCDC88B (via C-terminus); the interaction opposes ERN1-mediated JNK activation, protecting against apoptosis. Interacts with INPP5K; necessary for INPP5K localization at the endoplasmic reticulum. Interacts with MANF; the interaction is direct. Interacts with LOXL2; leading to activate the ERN1/IRE1-XBP1 pathway of the unfolded protein response. Interacts with CLU under stressed condition; interaction increases CLU protein stability; facilitates its retrotranslocation and redistribution to the mitochondria; cooperatively suppress stress-induced apoptosis by stabilizing mitochondrial membrane integrity. Interacts with CCDC47. Interacts with CLN3. Interacts with ELAPOR1; may regulate the function of HSPA5 in apoptosis and cell proliferation. Interacts with CASP7. Interacts with ILDR2; the interaction stabilizes ILDR2 expression. Interacts with ADAM7. Post-translationally, in unstressed cells, AMPylation at Thr-162 by FICD inactivates the chaperome activity: AMPylated form is locked in a relatively inert state and only weakly stimulated by J domain-containing proteins. In response to endoplasmic reticulum stress, de-AMPylation by the same protein, FICD, restores the chaperone activity.

Its subcellular location is the endoplasmic reticulum lumen. It localises to the melanosome. It is found in the cytoplasm. The protein localises to the cell surface. The catalysed reaction is ATP + H2O = ADP + phosphate + H(+). The chaperone activity is regulated by ATP-induced allosteric coupling of the nucleotide-binding (NBD) and substrate-binding (SBD) domains. In the ADP-bound and nucleotide-free (apo) states, the two domains have little interaction. In contrast, in the ATP-bound state the two domains are tightly coupled, which results in drastically accelerated kinetics in both binding and release of polypeptide substrates. J domain-containing co-chaperones (DNAJB9/ERdj4 or DNAJC10/ERdj5) stimulate the ATPase activity and are required for efficient substrate recognition by HSPA5/BiP. Homooligomerization inactivates participating HSPA5/BiP protomers and probably act as reservoirs to store HSPA5/BiP molecules when they are not needed by the cell. Functionally, endoplasmic reticulum chaperone that plays a key role in protein folding and quality control in the endoplasmic reticulum lumen. Involved in the correct folding of proteins and degradation of misfolded proteins via its interaction with DNAJC10/ERdj5, probably to facilitate the release of DNAJC10/ERdj5 from its substrate. Acts as a key repressor of the EIF2AK3/PERK and ERN1/IRE1-mediated unfolded protein response (UPR). In the unstressed endoplasmic reticulum, recruited by DNAJB9/ERdj4 to the luminal region of ERN1/IRE1, leading to disrupt the dimerization of ERN1/IRE1, thereby inactivating ERN1/IRE1. Also binds and inactivates EIF2AK3/PERK in unstressed cells. Accumulation of misfolded protein in the endoplasmic reticulum causes release of HSPA5/BiP from ERN1/IRE1 and EIF2AK3/PERK, allowing their homodimerization and subsequent activation. Plays an auxiliary role in post-translational transport of small presecretory proteins across endoplasmic reticulum (ER). May function as an allosteric modulator for SEC61 channel-forming translocon complex, likely cooperating with SEC62 to enable the productive insertion of these precursors into SEC61 channel. Appears to specifically regulate translocation of precursors having inhibitory residues in their mature region that weaken channel gating. May also play a role in apoptosis and cell proliferation. The polypeptide is Endoplasmic reticulum chaperone BiP (Sus scrofa (Pig)).